We begin with the raw amino-acid sequence, 254 residues long: NAD kinase (254 aa).

D44 acts as the Proton acceptor in catalysis. Residues 44–45 (DG), 114–115 (NE), D144, A152, 155–160 (TAYNYS), and A179 each bind NAD(+).

This sequence belongs to the NAD kinase family. A divalent metal cation is required as a cofactor.

It is found in the cytoplasm. The enzyme catalyses NAD(+) + ATP = ADP + NADP(+) + H(+). In terms of biological role, involved in the regulation of the intracellular balance of NAD and NADP, and is a key enzyme in the biosynthesis of NADP. Catalyzes specifically the phosphorylation on 2'-hydroxyl of the adenosine moiety of NAD to yield NADP. In Cereibacter sphaeroides (strain ATCC 17023 / DSM 158 / JCM 6121 / CCUG 31486 / LMG 2827 / NBRC 12203 / NCIMB 8253 / ATH 2.4.1.) (Rhodobacter sphaeroides), this protein is NAD kinase.